The primary structure comprises 436 residues: Tol-Pal system protein TolB (436 aa).

A signal peptide spans 1-19 (MVKCSLIRALMVVAGLVGA).

This sequence belongs to the TolB family. The Tol-Pal system is composed of five core proteins: the inner membrane proteins TolA, TolQ and TolR, the periplasmic protein TolB and the outer membrane protein Pal. They form a network linking the inner and outer membranes and the peptidoglycan layer.

Its subcellular location is the periplasm. Part of the Tol-Pal system, which plays a role in outer membrane invagination during cell division and is important for maintaining outer membrane integrity. This is Tol-Pal system protein TolB from Rhizobium etli (strain ATCC 51251 / DSM 11541 / JCM 21823 / NBRC 15573 / CFN 42).